Here is a 333-residue protein sequence, read N- to C-terminus: Aquaporin-1 (333 aa).

The tract at residues 1–26 is disordered; the sequence is MQKMSEKPLYRAAENPTRNADRRAGR. Transmembrane regions (helical) follow at residues 85–105 and 116–136; these read LAMF…HFTG and FHGF…GGII. The short motif at 137–139 is the NPA 1 element; it reads NPA. A run of 3 helical transmembrane segments spans residues 156 to 176, 213 to 233, and 245 to 265; these read LVLV…VYLI, TGAI…FLSI, and LFPF…SYSA. Positions 270 to 272 match the NPA 2 motif; that stretch reads NPA. The chain crosses the membrane as a helical span at residues 303–323; sequence WLFPYVGALFGAVMYQIFVGV.

It belongs to the MIP/aquaporin (TC 1.A.8) family.

Its subcellular location is the cell membrane. Functionally, aquaglyceroporin that may modulate the water content and osmolytes during anhydrobiosis. This Milnesium tardigradum (Water bear) protein is Aquaporin-1.